Here is a 209-residue protein sequence, read N- to C-terminus: Large ribosomal subunit protein uL3 (209 aa).

Residues 118–150 are disordered; the sequence is GFQGAIKRHGQSRGPMTHGSRYHRRPGSMGPVD.

It belongs to the universal ribosomal protein uL3 family. Part of the 50S ribosomal subunit. Forms a cluster with proteins L14 and L19.

Its function is as follows. One of the primary rRNA binding proteins, it binds directly near the 3'-end of the 23S rRNA, where it nucleates assembly of the 50S subunit. The sequence is that of Large ribosomal subunit protein uL3 from Bacillus pumilus (strain SAFR-032).